Reading from the N-terminus, the 526-residue chain is Bifunctional purine biosynthesis protein PurH (526 aa).

Residues 1 to 148 (MSLNNIIKNA…KNYKDVIVIV (148 aa)) form the MGS-like domain.

This sequence belongs to the PurH family.

The enzyme catalyses (6R)-10-formyltetrahydrofolate + 5-amino-1-(5-phospho-beta-D-ribosyl)imidazole-4-carboxamide = 5-formamido-1-(5-phospho-D-ribosyl)imidazole-4-carboxamide + (6S)-5,6,7,8-tetrahydrofolate. It catalyses the reaction IMP + H2O = 5-formamido-1-(5-phospho-D-ribosyl)imidazole-4-carboxamide. It participates in purine metabolism; IMP biosynthesis via de novo pathway; 5-formamido-1-(5-phospho-D-ribosyl)imidazole-4-carboxamide from 5-amino-1-(5-phospho-D-ribosyl)imidazole-4-carboxamide (10-formyl THF route): step 1/1. The protein operates within purine metabolism; IMP biosynthesis via de novo pathway; IMP from 5-formamido-1-(5-phospho-D-ribosyl)imidazole-4-carboxamide: step 1/1. The polypeptide is Bifunctional purine biosynthesis protein PurH (Buchnera aphidicola subsp. Schizaphis graminum (strain Sg)).